A 3916-amino-acid polypeptide reads, in one-letter code: Fusarin C synthetase (3916 aa).

In terms of domain architecture, Ketosynthase family 3 (KS3) spans 9 to 440 (KEPIAIIGTS…GTNVHAIIEQ (432 aa)). Active-site for beta-ketoacyl synthase activity residues include Cys182, His319, and His360. Residues 548-869 (VFTGQGAQWP…VTRNIHDVEA (322 aa)) are malonyl-CoA:ACP transacylase (MAT) domain. The tract at residues 935–1068 (HPLLGARSVE…GQLRVEFSSL (134 aa)) is N-terminal hotdog fold. The tract at residues 935–1228 (HPLLGARSVE…GLTCTSLLRP (294 aa)) is dehydratase (DH) domain. The PKS/mFAS DH domain maps to 935 to 1231 (HPLLGARSVE…CTSLLRPGPS (297 aa)). Residue His967 is the Proton acceptor; for dehydratase activity of the active site. Positions 1084–1231 (LTSVDMERFY…CTSLLRPGPS (148 aa)) are C-terminal hotdog fold. Residue Asp1141 is the Proton donor; for dehydratase activity of the active site. The segment at 1350-1584 (VGENLPAVVR…YMTSVMLSQA (235 aa)) is C-methyltransferase (CMeT) domain. The interval 2092–2266 (TYLLIGFTGG…AASVMHIGMV (175 aa)) is ketoreductase (KR) domain 1. Residues 2372–2449 (EILAVVEEEF…ELCSTVVSHL (78 aa)) form the Carrier 1 domain. Residue Ser2409 is modified to O-(pantetheine 4'-phosphoryl)serine. Positions 2482 to 2511 (ASPTENEPFTIRNSPNSTQVTSESGVDEET) are disordered. Residues 2486 to 2505 (ENEPFTIRNSPNSTQVTSES) are compositionally biased toward polar residues. A condensation region spans residues 2522-2806 (PLSFAQERLW…VNLLPLRLKL (285 aa)). Positions 2973 to 3385 (FEKCVVNQPD…RIAGDSQIKL (413 aa)) are adenylation. One can recognise a Carrier 2 domain in the interval 3493–3570 (KPLTETQERL…EMAAKIDGFT (78 aa)). Ser3530 is modified (O-(pantetheine 4'-phosphoryl)serine). Residues 3612–3833 (LTGATGFLGV…DFVPVDVVAA (222 aa)) form a thiolester reductase (R) domain region.

In the C-terminal section; belongs to the NRP synthetase family.

Its pathway is mycotoxin biosynthesis. Fusarin C synthetase; part of the gene cluster that mediates the biosynthesis of the mycotoxin fusarin C. Within the cluster, FUS1, FUS2, FUS8 and FUS9 are sufficient for fusarin production. The roles of the other FUS members are yet undetermined. The fusarin C synthetase FUS1 is responsible for the condensation of one acetyl-coenzyme A (CoA) unit with six malonyl-CoA units and the amide linkage of the arising heptaketide and homoserine, subsequently releasing the first intermediate, prefusarin, as an alcohol with an open ring structure. The cytochrome P450 monooxygenase FUS8 participates in multiple oxidation processes at carbon C-20 and is able to use the FUS1 product as substrate, resulting in formation of 20-hydroxy-prefusarin. This reaction seems to be essential before the 2-pyrrolidone ring closure can be catalyzed by FUS2, generating 20-hydroxy-fusarin. FUS8 is able to further oxidizes carbon C-20 after ring closure, resulting in the formation of carboxy-fusarin C. As the last step, FUS9 methylates the hydroxyl group at C-21 to generate fusarin C. Fusarin C can then rearrange to epi-fusarin C, the (z)-isomers, and fusarin A and fusarin D. The protein is Fusarin C synthetase of Gibberella moniliformis (strain M3125 / FGSC 7600) (Maize ear and stalk rot fungus).